Reading from the N-terminus, the 251-residue chain is Tryptophan synthase alpha chain (251 aa).

Catalysis depends on proton acceptor residues Glu-36 and Asp-47.

It belongs to the TrpA family. As to quaternary structure, tetramer of two alpha and two beta chains.

It catalyses the reaction (1S,2R)-1-C-(indol-3-yl)glycerol 3-phosphate + L-serine = D-glyceraldehyde 3-phosphate + L-tryptophan + H2O. It participates in amino-acid biosynthesis; L-tryptophan biosynthesis; L-tryptophan from chorismate: step 5/5. Functionally, the alpha subunit is responsible for the aldol cleavage of indoleglycerol phosphate to indole and glyceraldehyde 3-phosphate. The sequence is that of Tryptophan synthase alpha chain from Thermococcus kodakarensis (strain ATCC BAA-918 / JCM 12380 / KOD1) (Pyrococcus kodakaraensis (strain KOD1)).